The following is a 634-amino-acid chain: 1-deoxy-D-xylulose-5-phosphate synthase (634 aa).

Residues H73 and 114-116 (GHS) each bind thiamine diphosphate. Mg(2+) is bound at residue D145. Residues 146-147 (GA), N174, Y285, and E365 contribute to the thiamine diphosphate site. A Mg(2+)-binding site is contributed by N174.

The protein belongs to the transketolase family. DXPS subfamily. Homodimer. Mg(2+) serves as cofactor. Requires thiamine diphosphate as cofactor.

The catalysed reaction is D-glyceraldehyde 3-phosphate + pyruvate + H(+) = 1-deoxy-D-xylulose 5-phosphate + CO2. Its pathway is metabolic intermediate biosynthesis; 1-deoxy-D-xylulose 5-phosphate biosynthesis; 1-deoxy-D-xylulose 5-phosphate from D-glyceraldehyde 3-phosphate and pyruvate: step 1/1. Its function is as follows. Catalyzes the acyloin condensation reaction between C atoms 2 and 3 of pyruvate and glyceraldehyde 3-phosphate to yield 1-deoxy-D-xylulose-5-phosphate (DXP). The protein is 1-deoxy-D-xylulose-5-phosphate synthase of Desulforudis audaxviator (strain MP104C).